The primary structure comprises 391 residues: Formate-dependent phosphoribosylglycinamide formyltransferase (391 aa).

N(1)-(5-phospho-beta-D-ribosyl)glycinamide-binding positions include 20–21 (EL) and Glu80. ATP-binding positions include Arg112, Lys153, 158–163 (SSGKGQ), 193–196 (EGFI), and Glu201. Positions 117 to 306 (RLAAETLGLP…EFALHVRAIL (190 aa)) constitute an ATP-grasp domain. The Mg(2+) site is built by Glu265 and Glu277. Residues Asp284, Lys354, and 361-362 (RR) each bind N(1)-(5-phospho-beta-D-ribosyl)glycinamide.

It belongs to the PurK/PurT family. Homodimer.

It catalyses the reaction N(1)-(5-phospho-beta-D-ribosyl)glycinamide + formate + ATP = N(2)-formyl-N(1)-(5-phospho-beta-D-ribosyl)glycinamide + ADP + phosphate + H(+). It participates in purine metabolism; IMP biosynthesis via de novo pathway; N(2)-formyl-N(1)-(5-phospho-D-ribosyl)glycinamide from N(1)-(5-phospho-D-ribosyl)glycinamide (formate route): step 1/1. Involved in the de novo purine biosynthesis. Catalyzes the transfer of formate to 5-phospho-ribosyl-glycinamide (GAR), producing 5-phospho-ribosyl-N-formylglycinamide (FGAR). Formate is provided by PurU via hydrolysis of 10-formyl-tetrahydrofolate. In Shewanella sp. (strain MR-7), this protein is Formate-dependent phosphoribosylglycinamide formyltransferase.